A 674-amino-acid polypeptide reads, in one-letter code: MTLEEARRRVNELRDLIRYHNYLYYVLDAPEISDAEYDRLLRELKELEERFPELKSPDSPTEQVGARPLEATFRPVRHPTRMYSLDNAFSLDEVRAFEERIERALGRKGPFLYTVERKVDGLSVNLYYEEGILVFGATRGDGETGEEVTQNLLTIPTIPRRLTGVPDRLEVRGEVYMPIEAFLRLNQELEEAGERIFKNPRNAAAGSLRQKDPRVTARRGLRATFYALGLGLEETGLKSQHDLLLWLRERGFPVEHGFTRALGAEGVEEVYQAWLKERRKLPFEADGVVVKLDDLALWRELGYTARTPRFALAYKFPAEEKETRLLSVAFQVGRTGRITPVGVLEPVFIEGSEVSRVTLHNESFIEELDVRIGDWVLVHKAGGVIPEVLRVLKERRTGEEKPIIWPENCPECGHALIKEGKVHRCPNPLCPAKRFEAIRHYASRKAMDIQGLGEKLIEKLLEKGLVRDVADLYRLKKEDLVNLERMGEKSAENLLRQIEESKGRGLERLLYALGLPGVGEVLARNLALRFGHMDRLLEAGLEDLLEVEGVGELTARAILNTLKDPEFRDLVRRLKEAGVEMEAKEREGEALKGLTFVITGELSRPREEVKALLRRLGAKVTDSVSRKTSFLVVGENPGSKLEKARALGVPTLSEEELYRLIEERTGKDPRALTA.

Residues 34 to 38 (DAEYD), 84 to 85 (SL), and Glu116 contribute to the NAD(+) site. The active-site N6-AMP-lysine intermediate is the Lys118. NAD(+) is bound by residues Arg139, Glu174, Lys291, and Lys315. The Zn(2+) site is built by Cys409, Cys412, Cys425, and Cys430. One can recognise a BRCT domain in the interval 586–674 (REGEALKGLT…TGKDPRALTA (89 aa)).

It belongs to the NAD-dependent DNA ligase family. LigA subfamily. Requires Mg(2+) as cofactor. The cofactor is Mn(2+).

The catalysed reaction is NAD(+) + (deoxyribonucleotide)n-3'-hydroxyl + 5'-phospho-(deoxyribonucleotide)m = (deoxyribonucleotide)n+m + AMP + beta-nicotinamide D-nucleotide.. DNA ligase that catalyzes the formation of phosphodiester linkages between 5'-phosphoryl and 3'-hydroxyl groups in double-stranded DNA using NAD as a coenzyme and as the energy source for the reaction. It is essential for DNA replication and repair of damaged DNA. This Thermus sp. (strain AK16D) protein is DNA ligase.